A 59-amino-acid polypeptide reads, in one-letter code: Large ribosomal subunit protein uL30 (59 aa).

It belongs to the universal ribosomal protein uL30 family. As to quaternary structure, part of the 50S ribosomal subunit.

The polypeptide is Large ribosomal subunit protein uL30 (Pelotomaculum thermopropionicum (strain DSM 13744 / JCM 10971 / SI)).